The primary structure comprises 423 residues: Serine/threonine-protein kinase ppk25 (423 aa).

Phosphoserine occurs at positions 36 and 38. The region spanning 53 to 305 (WIIKKTIGAG…LEQAAKFPWL (253 aa)) is the Protein kinase domain. Residues 59-67 (IGAGSMGKV) and Lys-82 contribute to the ATP site. The Proton acceptor role is filled by Asp-175.

This sequence belongs to the protein kinase superfamily. Ser/Thr protein kinase family.

The protein localises to the cytoplasm. It carries out the reaction L-seryl-[protein] + ATP = O-phospho-L-seryl-[protein] + ADP + H(+). The catalysed reaction is L-threonyl-[protein] + ATP = O-phospho-L-threonyl-[protein] + ADP + H(+). In Schizosaccharomyces pombe (strain 972 / ATCC 24843) (Fission yeast), this protein is Serine/threonine-protein kinase ppk25 (ppk25).